A 353-amino-acid polypeptide reads, in one-letter code: Lactosylceramide 4-alpha-galactosyltransferase (353 aa).

Residues 1–22 (MSKPPDLLLRLLRGAPRQRVCT) lie on the Cytoplasmic side of the membrane. Residues 23–43 (LFIIGFKFTFFVSIMIYWHVV) traverse the membrane as a helical; Signal-anchor for type II membrane protein segment. The Lumenal portion of the chain corresponds to 44–353 (GEPKEKGQLY…TTHEAMKMYL (310 aa)). N121 carries an N-linked (GlcNAc...) asparagine glycan. A DXD motif motif is present at residues 192 to 194 (DTD). N203 carries an N-linked (GlcNAc...) asparagine glycan.

Belongs to the glycosyltransferase 32 family.

Its subcellular location is the golgi apparatus membrane. The catalysed reaction is a beta-D-Gal-(1-&gt;4)-beta-D-Glc-(1&lt;-&gt;1)-Cer(d18:1(4E)) + UDP-alpha-D-galactose = a globoside Gb3Cer (d18:1(4E)) + UDP + H(+). It carries out the reaction a beta-D-Gal-(1&lt;-&gt;1')-ceramide + UDP-alpha-D-galactose = alpha-D-Gal-(1-&gt;4)-beta-D-Gal-(1&lt;-&gt;1')-Cer + UDP + H(+). Its pathway is glycolipid biosynthesis. Its function is as follows. Catalyzes the transfer of galactose from UDP-alpha-D-galactose to lactosylceramide/beta-D-galactosyl-(1-&gt;4)-beta-D-glucosyl-(1&lt;-&gt;1)-ceramide(d18:1(4E)) to produce globotriaosylceramide/globoside Gb3Cer (d18:1(4E)). Also able to transfer galactose to galactosylceramide/beta-D-Gal-(1&lt;-&gt;1')-Cer. Globoside Gb3Cer is a glycosphingolipid of the globo serie, one of the major types of neutral root structures of glycosphingolipids, that constitute a significant portion of mammalian cell membranes. This Pan troglodytes (Chimpanzee) protein is Lactosylceramide 4-alpha-galactosyltransferase (A4GALT).